A 322-amino-acid polypeptide reads, in one-letter code: Protein-L-isoaspartate O-methyltransferase (322 aa).

The disordered stretch occupies residues 1–101; the sequence is MSGERAKRFP…AKQGDRSAAP (101 aa). Basic and acidic residues predominate over residues 14 to 29; the sequence is EDLKREPRKPEGRVAE. 2 stretches are compositionally biased toward low complexity: residues 33-51 and 76-91; these read AGDA…PAAA and HAPA…PQGG. Residue S170 is part of the active site.

This sequence belongs to the methyltransferase superfamily. L-isoaspartyl/D-aspartyl protein methyltransferase family.

Its subcellular location is the cytoplasm. The enzyme catalyses [protein]-L-isoaspartate + S-adenosyl-L-methionine = [protein]-L-isoaspartate alpha-methyl ester + S-adenosyl-L-homocysteine. Functionally, catalyzes the methyl esterification of L-isoaspartyl residues in peptides and proteins that result from spontaneous decomposition of normal L-aspartyl and L-asparaginyl residues. It plays a role in the repair and/or degradation of damaged proteins. The polypeptide is Protein-L-isoaspartate O-methyltransferase (Burkholderia mallei (strain NCTC 10247)).